The chain runs to 320 residues: Glutathione synthetase (320 aa).

The ATP-grasp domain maps to 130–315 (KIFISWFSRF…ITGILIDYIE (186 aa)). Residue 156-212 (WKEKNDIILKPLDAMGGKGVFRIKKDDPNFSVIVETLTNYEKKYCMIQTYLPEVQFG) participates in ATP binding. Positions 286 and 288 each coordinate Mg(2+).

The protein belongs to the prokaryotic GSH synthase family. Requires Mg(2+) as cofactor. It depends on Mn(2+) as a cofactor.

It carries out the reaction gamma-L-glutamyl-L-cysteine + glycine + ATP = glutathione + ADP + phosphate + H(+). Its pathway is sulfur metabolism; glutathione biosynthesis; glutathione from L-cysteine and L-glutamate: step 2/2. This is Glutathione synthetase from Buchnera aphidicola subsp. Schizaphis graminum (strain Sg).